A 489-amino-acid chain; its full sequence is Putative (R)-citramalate synthase CimA (489 aa).

Residues 3 to 255 (VKILDTTLRD…KTKIKKERLY (253 aa)) form the Pyruvate carboxyltransferase domain.

This sequence belongs to the alpha-IPM synthase/homocitrate synthase family. Homodimer.

The enzyme catalyses pyruvate + acetyl-CoA + H2O = (3R)-citramalate + CoA + H(+). It functions in the pathway amino-acid biosynthesis; L-isoleucine biosynthesis; 2-oxobutanoate from pyruvate: step 1/3. Functionally, catalyzes the condensation of pyruvate and acetyl-coenzyme A to form (R)-citramalate. In Archaeoglobus fulgidus (strain ATCC 49558 / DSM 4304 / JCM 9628 / NBRC 100126 / VC-16), this protein is Putative (R)-citramalate synthase CimA (cimA).